The following is a 232-amino-acid chain: Small ribosomal subunit protein uS3 (232 aa).

The 69-residue stretch at 39–107 (VRRFLEQRLK…PVHVNIEEVR (69 aa)) folds into the KH type-2 domain.

Belongs to the universal ribosomal protein uS3 family. Part of the 30S ribosomal subunit. Forms a tight complex with proteins S10 and S14.

Binds the lower part of the 30S subunit head. Binds mRNA in the 70S ribosome, positioning it for translation. This is Small ribosomal subunit protein uS3 from Chromohalobacter salexigens (strain ATCC BAA-138 / DSM 3043 / CIP 106854 / NCIMB 13768 / 1H11).